Reading from the N-terminus, the 112-residue chain is Protein Churchill (112 aa).

Residues Cys-2, Cys-5, Cys-30, Cys-33, His-59, Cys-61, Cys-64, His-66, His-71, Cys-88, and Cys-91 each coordinate Zn(2+).

The protein belongs to the Churchill family.

In terms of biological role, transcriptional activator that mediates FGF signaling during neural development. Plays a role in the regulation of cell movement. Does not bind DNA by itself. The protein is Protein Churchill (CHURC1) of Bos taurus (Bovine).